A 239-amino-acid chain; its full sequence is Pyridoxine 5'-phosphate synthase (239 aa).

Residue asparagine 7 coordinates 3-amino-2-oxopropyl phosphate. 9-10 is a 1-deoxy-D-xylulose 5-phosphate binding site; it reads DH. 3-amino-2-oxopropyl phosphate is bound at residue arginine 18. Histidine 43 acts as the Proton acceptor in catalysis. Arginine 45 and histidine 50 together coordinate 1-deoxy-D-xylulose 5-phosphate. Glutamate 70 (proton acceptor) is an active-site residue. Threonine 100 lines the 1-deoxy-D-xylulose 5-phosphate pocket. The active-site Proton donor is the histidine 191. 3-amino-2-oxopropyl phosphate is bound by residues glycine 192 and 213 to 214; that span reads GH.

The protein belongs to the PNP synthase family. In terms of assembly, homooctamer; tetramer of dimers.

The protein localises to the cytoplasm. It catalyses the reaction 3-amino-2-oxopropyl phosphate + 1-deoxy-D-xylulose 5-phosphate = pyridoxine 5'-phosphate + phosphate + 2 H2O + H(+). It participates in cofactor biosynthesis; pyridoxine 5'-phosphate biosynthesis; pyridoxine 5'-phosphate from D-erythrose 4-phosphate: step 5/5. Functionally, catalyzes the complicated ring closure reaction between the two acyclic compounds 1-deoxy-D-xylulose-5-phosphate (DXP) and 3-amino-2-oxopropyl phosphate (1-amino-acetone-3-phosphate or AAP) to form pyridoxine 5'-phosphate (PNP) and inorganic phosphate. This chain is Pyridoxine 5'-phosphate synthase, found in Geotalea uraniireducens (strain Rf4) (Geobacter uraniireducens).